A 1024-amino-acid polypeptide reads, in one-letter code: Nardilysin-like (1024 aa).

Residues 41 to 103 (PDIYPEGSVP…DEVKGKGDHQ (63 aa)) are disordered. Residues 52-95 (QIDEDDEDGEEEDSDGSSEDDDDDEDDEEDGEGDEEDEDEDEDE) show a composition bias toward acidic residues. H129 serves as a coordination point for Zn(2+). E132 acts as the Proton acceptor in catalysis. H133 contributes to the Zn(2+) binding site. E203 is a catalytic residue. E210 provides a ligand contact to Zn(2+).

This sequence belongs to the peptidase M16 family. The cofactor is Zn(2+).

It carries out the reaction Hydrolysis of polypeptides, preferably at -Xaa-|-Arg-Lys-, and less commonly at -Arg-|-Arg-Xaa-, in which Xaa is not Arg or Lys.. Its function is as follows. Cleaves peptide substrates on the N-terminus of arginine residues in dibasic pairs. In Arabidopsis thaliana (Mouse-ear cress), this protein is Nardilysin-like.